A 271-amino-acid chain; its full sequence is Putative phosphoenolpyruvate synthase regulatory protein (271 aa).

151–158 (GVSRSGKT) contributes to the ADP binding site.

The protein belongs to the pyruvate, phosphate/water dikinase regulatory protein family. PSRP subfamily.

The enzyme catalyses [pyruvate, water dikinase] + ADP = [pyruvate, water dikinase]-phosphate + AMP + H(+). It carries out the reaction [pyruvate, water dikinase]-phosphate + phosphate + H(+) = [pyruvate, water dikinase] + diphosphate. Bifunctional serine/threonine kinase and phosphorylase involved in the regulation of the phosphoenolpyruvate synthase (PEPS) by catalyzing its phosphorylation/dephosphorylation. In Paraburkholderia phytofirmans (strain DSM 17436 / LMG 22146 / PsJN) (Burkholderia phytofirmans), this protein is Putative phosphoenolpyruvate synthase regulatory protein.